A 397-amino-acid chain; its full sequence is Teichoic acid D-alanine hydrolase (397 aa).

An N-terminal signal peptide occupies residues 1-27 (MKFNKEKLVIHACVLLFIIISIGLVFH).

It is found in the cell membrane. The catalysed reaction is [(4-D-Ala)-(2-GlcNAc)-Rib-ol-P]n-[Gro-P]m-beta-D-ManNAc-(1-&gt;4)-alpha-D-GlcNAc-P-peptidoglycan + n H2O = [(2-GlcNAc)-Rib-ol-P]n-[Gro-P]m-beta-D-ManNAc-(1-&gt;4)-alpha-D-GlcNAc-P-peptidoglycan + n D-alanine.. Functionally, catalyzes the liberation of D-alanyl moieties present on wall teichoic acid (WTA) and lipoteichoic acid (LTA). Affects the methicillin resistance level and autolysis in the presence of Triton X-100 as well as the cell wall structure. This Staphylococcus aureus (strain MRSA252) protein is Teichoic acid D-alanine hydrolase (fmtA).